Reading from the N-terminus, the 1166-residue chain is Peroxisomal ATPase PEX6 (1166 aa).

The protein belongs to the AAA ATPase family. In terms of assembly, interacts with PEX1; forming the PEX1-PEX6 AAA ATPase complex, which is composed of a heterohexamer formed by a trimer of PEX1-PEX6 dimers.

It localises to the membrane. It carries out the reaction ATP + H2O = ADP + phosphate + H(+). In terms of biological role, component of the PEX1-PEX6 AAA ATPase complex involved in peroxisome biosynthesis. The complex acts as a protein dislocase complex that mediates the ATP-dependent extraction of the PEX5 receptor from peroxisomal membranes, an essential step for PEX5 recycling. Specifically recognizes PEX5 monoubiquitinated at 'Cys-6', and pulls it out of the peroxisome lumen through the PEX2-PEX10-PEX12 retrotranslocation channel. Extraction by the PEX1-PEX6 AAA ATPase complex is accompanied by unfolding of the TPR repeats and release of bound cargo from PEX5. The chain is Peroxisomal ATPase PEX6 from Komagataella phaffii (strain GS115 / ATCC 20864) (Yeast).